Reading from the N-terminus, the 211-residue chain is Protein-L-isoaspartate O-methyltransferase (211 aa).

The active site involves S60.

The protein belongs to the methyltransferase superfamily. L-isoaspartyl/D-aspartyl protein methyltransferase family.

It is found in the cytoplasm. The catalysed reaction is [protein]-L-isoaspartate + S-adenosyl-L-methionine = [protein]-L-isoaspartate alpha-methyl ester + S-adenosyl-L-homocysteine. In terms of biological role, catalyzes the methyl esterification of L-isoaspartyl residues in peptides and proteins that result from spontaneous decomposition of normal L-aspartyl and L-asparaginyl residues. It plays a role in the repair and/or degradation of damaged proteins. The protein is Protein-L-isoaspartate O-methyltransferase of Pseudomonas syringae pv. syringae (strain B728a).